The following is a 564-amino-acid chain: NAD-dependent malic enzyme (564 aa).

The active-site Proton donor is Tyr-102. Position 155 (Arg-155) interacts with NAD(+). The active-site Proton acceptor is the Lys-173. A divalent metal cation is bound by residues Glu-244, Asp-245, and Asp-268. 2 residues coordinate NAD(+): Asp-268 and Asn-417.

The protein belongs to the malic enzymes family. In terms of assembly, homotetramer. Mg(2+) serves as cofactor. Requires Mn(2+) as cofactor.

The enzyme catalyses (S)-malate + NAD(+) = pyruvate + CO2 + NADH. It carries out the reaction oxaloacetate + H(+) = pyruvate + CO2. This chain is NAD-dependent malic enzyme, found in Pseudomonas aeruginosa (strain UCBPP-PA14).